The following is a 103-amino-acid chain: Large ribosomal subunit protein uL23 (103 aa).

It belongs to the universal ribosomal protein uL23 family. As to quaternary structure, part of the 50S ribosomal subunit. Contacts protein L29, and trigger factor when it is bound to the ribosome.

Its function is as follows. One of the early assembly proteins it binds 23S rRNA. One of the proteins that surrounds the polypeptide exit tunnel on the outside of the ribosome. Forms the main docking site for trigger factor binding to the ribosome. This is Large ribosomal subunit protein uL23 from Chlorobium phaeovibrioides (strain DSM 265 / 1930) (Prosthecochloris vibrioformis (strain DSM 265)).